The following is a 108-amino-acid chain: Large ribosomal subunit protein bL31B (108 aa).

Residues 88-108 (AAVEEAPAVKSKKKAPIKKKK) form a disordered region. Positions 97 to 108 (KSKKKAPIKKKK) are enriched in basic residues.

The protein belongs to the bacterial ribosomal protein bL31 family. Type B subfamily. Part of the 50S ribosomal subunit.

The protein is Large ribosomal subunit protein bL31B of Chlamydia abortus (strain DSM 27085 / S26/3) (Chlamydophila abortus).